The primary structure comprises 527 residues: MLGNHAEVDIRRTFAIISHPDAGKTTITEKVLLFGQAIQVAGTVKGRGSKQHAKSDWMEMEKDRGISITTSVMQFPYKDCLVNLLDTPGHEDFSEDTYRTLTAVDSCLMVIDAAKGVEDRTRKLMEVTRLRDTPIITFMNKCDRDIRDPMEVMDEVENELKIACAPITWPIGCGKSFKGVYHLHRDETILYQSGLGHMMQEVRIVKGLDNPELDKAIGSELAEQLREELELVIGASHEFELAAFLKGELTPVYFGTALGNFGVDHMLDGLTQWAPKPQPRQTEVREVTSLDSDFSGFIFKIQANMDPKHRDRVAFMRVVSGKYEKGMKMHHVRVGKDVRISDALTFVAGDREQVEEAYPGDIIGLHNHGTIQIGDTFTQGEKLKFTGIPNFAPEMFRRIRLKDPLKQKQLLKGLVQLAEEGAVQVFRPLDNNDLIVGAVGVLQFEVVVGRLKSEYNVEAIYEAINVSTARWVYCKDERKLEEFRRKCSVNLALDGGNNLTYIAPTMVNLNLSMERYPDVAFAKTREN.

In terms of domain architecture, tr-type G spans 9-278 (DIRRTFAIIS…GLTQWAPKPQ (270 aa)). GTP contacts are provided by residues 18–25 (SHPDAGKT), 86–90 (DTPGH), and 140–143 (NKCD).

The protein belongs to the TRAFAC class translation factor GTPase superfamily. Classic translation factor GTPase family. PrfC subfamily.

The protein localises to the cytoplasm. Its function is as follows. Increases the formation of ribosomal termination complexes and stimulates activities of RF-1 and RF-2. It binds guanine nucleotides and has strong preference for UGA stop codons. It may interact directly with the ribosome. The stimulation of RF-1 and RF-2 is significantly reduced by GTP and GDP, but not by GMP. This chain is Peptide chain release factor 3, found in Shewanella denitrificans (strain OS217 / ATCC BAA-1090 / DSM 15013).